The sequence spans 676 residues: MNFDAVADQQMTDRRYFALEVAESDDADSSLNSSSMGSPAVDVGRKVYKITSHKGSAEDESQSFFTSSDSPTSKTRPVGKTIENDDYYGKRSSTGSSLKQLFNKININDTAHSSNKENVSQSVLSENKLLSPSKRLSKQGLTKVTNSKFRTPLRPISNQSTLSRDEPVKDFRSLKFRSGSDFKCWGDEKTSSHVHSSSVNSVNSFTSTTSSSKWKFWKNDNLLSRSLSSRSVNDQDPNFVQPKPTNSLQKKSSISSFHNSIFGGGKHTEKKRNSGFIMPDHQSTKELNHKHSSSNLSFRSLKHKTSHSSLNKLKVRRKGNTQELNHPIKKTCQISLPVPDQVSKDKIQLKLKNSTSLASLSSEVTPINTLDYNDSILQQILQLCDVKYILHDLREAQSLGLFTLNTRSVQLSHNFWQTYHSDMQTSLICKKVCLGALSDLTTSNLISLHELKSLRLIQGTSGVANLLQAYVVPSNQCENDQNLILYLFFKYQGTPLSRCSNIDYSQALSIFWQCSSILYVAESKFQLEHRNLTLDHILIDSKGNVTLIDMKCCRFLNIDNNKASYTRLDHHYFFQGRGTLQFEIYELMRSMLPQPISWATFEPRTNLLWLYHLSSSLLKMAKKAVVSGALNREENILIELTHLLDPARKHSKTIFKKELVIRTCGDLLSLKGEIMQ.

A disordered region spans residues 53 to 93; sequence HKGSAEDESQSFFTSSDSPTSKTRPVGKTIENDDYYGKRSS. Residues 62 to 75 show a composition bias toward polar residues; the sequence is QSFFTSSDSPTSKT. The KEN box motif lies at 116-118; that stretch reads KEN. Residues 150–158 carry the D box motif; that stretch reads RTPLRPISN. The tract at residues 228–312 is disordered; the sequence is SSRSVNDQDP…HKTSHSSLNK (85 aa). Positions 232–259 are enriched in polar residues; it reads VNDQDPNFVQPKPTNSLQKKSSISSFHN. The Protein kinase domain occupies 383 to 672; it reads LCDVKYILHD…TCGDLLSLKG (290 aa). ATP-binding positions include 389 to 397 and Lys430; that span reads ILHDLREAQ.

It belongs to the protein kinase superfamily. Ser/Thr protein kinase family. Haspin subfamily. Periodically phosphorylated during the cell cycle with a phosphorylation peak during mitosis and hyperphosphorylated after DNA damage.

The catalysed reaction is L-seryl-[protein] + ATP = O-phospho-L-seryl-[protein] + ADP + H(+). It catalyses the reaction L-threonyl-[protein] + ATP = O-phospho-L-threonyl-[protein] + ADP + H(+). Functionally, serine/threonine haspin-like protein kinase involved in cell cycle regulation. The polypeptide is Serine/threonine-protein kinase Haspin homolog ALK2 (ALK2) (Saccharomyces cerevisiae (strain ATCC 204508 / S288c) (Baker's yeast)).